A 236-amino-acid polypeptide reads, in one-letter code: (5-formylfuran-3-yl)methyl phosphate synthase (236 aa).

Lysine 27 (schiff-base intermediate with substrate) is an active-site residue. The Proton acceptor role is filled by lysine 85.

This sequence belongs to the MfnB family.

It carries out the reaction 2 D-glyceraldehyde 3-phosphate = 4-(hydroxymethyl)-2-furancarboxaldehyde phosphate + phosphate + 2 H2O. The protein operates within cofactor biosynthesis; methanofuran biosynthesis. Catalyzes the formation of 4-(hydroxymethyl)-2-furancarboxaldehyde phosphate (4-HFC-P) from two molecules of glyceraldehyde-3-P (GA-3-P). In Methanococcus maripaludis (strain C5 / ATCC BAA-1333), this protein is (5-formylfuran-3-yl)methyl phosphate synthase.